The primary structure comprises 267 residues: Large ribosomal subunit protein bL9m (267 aa).

Residues 1–52 constitute a mitochondrion transit peptide; it reads MAALVVTEPGRALLRAGTERLLRGGIQELLRPRHEGNSPGLARDFSLSQNRG.

Belongs to the bacterial ribosomal protein bL9 family. As to quaternary structure, component of the mitochondrial ribosome large subunit (39S) which comprises a 16S rRNA and about 50 distinct proteins.

The protein localises to the mitochondrion. The polypeptide is Large ribosomal subunit protein bL9m (MRPL9) (Papio anubis (Olive baboon)).